A 341-amino-acid polypeptide reads, in one-letter code: UDP-N-acetylenolpyruvoylglucosamine reductase (341 aa).

One can recognise an FAD-binding PCMH-type domain in the interval 13-185 (FGVEQSCLSM…TAVGLRLPKA (173 aa)). The active site involves R161. S231 (proton donor) is an active-site residue. E327 is an active-site residue.

This sequence belongs to the MurB family. It depends on FAD as a cofactor.

The protein resides in the cytoplasm. The enzyme catalyses UDP-N-acetyl-alpha-D-muramate + NADP(+) = UDP-N-acetyl-3-O-(1-carboxyvinyl)-alpha-D-glucosamine + NADPH + H(+). It functions in the pathway cell wall biogenesis; peptidoglycan biosynthesis. Functionally, cell wall formation. This is UDP-N-acetylenolpyruvoylglucosamine reductase from Shewanella sp. (strain MR-7).